The following is a 745-amino-acid chain: Aminopeptidase NAALADL1 (745 aa).

The Cytoplasmic portion of the chain corresponds to 1 to 6 (MHWAKI). A helical; Signal-anchor for type II membrane protein membrane pass occupies residues 7–28 (LGVGIGAAALLGLGIILGHFAI). Over 29 to 745 (PKATEPLASS…AATLQPVTDL (717 aa)) the chain is Extracellular. 3 N-linked (GlcNAc...) asparagine glycosylation sites follow: Asn-128, Asn-141, and Asn-235. Thr-263 and Leu-266 together coordinate Ca(2+). N-linked (GlcNAc...) asparagine glycosylation is found at Asn-279, Asn-304, and Asn-350. The cysteines at positions 301 and 318 are disulfide-linked. His-373 and Asp-383 together coordinate Zn(2+). Glu-421 serves as the catalytic Proton donor/acceptor. Glu-422 lines the Zn(2+) pocket. 2 residues coordinate Ca(2+): Glu-430 and Glu-433. Residue Asp-450 coordinates Zn(2+). N-linked (GlcNAc...) asparagine glycans are attached at residues Asn-456 and Asn-497. His-550 serves as a coordination point for Zn(2+). N-linked (GlcNAc...) asparagine glycosylation is found at Asn-593 and Asn-620.

This sequence belongs to the peptidase M28 family. M28B subfamily. In terms of assembly, homodimer. Zn(2+) is required as a cofactor. N-glycosylated. In terms of tissue distribution, detected on apical villi on the brush border membrane of ileum enterocytes (at protein level). Mainly expressed in the distal small intestine.

It is found in the apical cell membrane. Aminopeptidase with broad substrate specificity. Has lower activity with substrates that have Asp or Glu in the P2' position, or Pro in the P3' position. Lacks activity with substrates that have both Pro in the P3' position and Asp or Glu in the P2' position. Lacks carboxypeptidase activity. Lacks dipeptidyl-peptidase IV type activity. This Rattus norvegicus (Rat) protein is Aminopeptidase NAALADL1 (Naaladl1).